The primary structure comprises 251 residues: Ubiquinone/menaquinone biosynthesis C-methyltransferase UbiE (251 aa).

Residues threonine 74, aspartate 95, 123 to 124, and serine 140 each bind S-adenosyl-L-methionine; that span reads NA.

This sequence belongs to the class I-like SAM-binding methyltransferase superfamily. MenG/UbiE family.

The catalysed reaction is a 2-demethylmenaquinol + S-adenosyl-L-methionine = a menaquinol + S-adenosyl-L-homocysteine + H(+). It carries out the reaction a 2-methoxy-6-(all-trans-polyprenyl)benzene-1,4-diol + S-adenosyl-L-methionine = a 5-methoxy-2-methyl-3-(all-trans-polyprenyl)benzene-1,4-diol + S-adenosyl-L-homocysteine + H(+). Its pathway is quinol/quinone metabolism; menaquinone biosynthesis; menaquinol from 1,4-dihydroxy-2-naphthoate: step 2/2. It participates in cofactor biosynthesis; ubiquinone biosynthesis. Methyltransferase required for the conversion of demethylmenaquinol (DMKH2) to menaquinol (MKH2) and the conversion of 2-polyprenyl-6-methoxy-1,4-benzoquinol (DDMQH2) to 2-polyprenyl-3-methyl-6-methoxy-1,4-benzoquinol (DMQH2). This is Ubiquinone/menaquinone biosynthesis C-methyltransferase UbiE from Klebsiella pneumoniae subsp. pneumoniae (strain ATCC 700721 / MGH 78578).